A 445-amino-acid polypeptide reads, in one-letter code: UPF0210 protein SMU_73 (445 aa).

Belongs to the UPF0210 family. In terms of assembly, homodimer.

This is UPF0210 protein SMU_73 from Streptococcus mutans serotype c (strain ATCC 700610 / UA159).